The chain runs to 321 residues: Beta-ketoacyl-[acyl-carrier-protein] synthase III (321 aa).

Catalysis depends on residues Cys-113 and His-248. The tract at residues 249–253 is ACP-binding; that stretch reads QANAR. Asn-278 is an active-site residue.

The protein belongs to the thiolase-like superfamily. FabH family. Homodimer.

It is found in the cytoplasm. The enzyme catalyses malonyl-[ACP] + acetyl-CoA + H(+) = 3-oxobutanoyl-[ACP] + CO2 + CoA. Its pathway is lipid metabolism; fatty acid biosynthesis. Catalyzes the condensation reaction of fatty acid synthesis by the addition to an acyl acceptor of two carbons from malonyl-ACP. Catalyzes the first condensation reaction which initiates fatty acid synthesis and may therefore play a role in governing the total rate of fatty acid production. Possesses both acetoacetyl-ACP synthase and acetyl transacylase activities. Its substrate specificity determines the biosynthesis of branched-chain and/or straight-chain of fatty acids. The polypeptide is Beta-ketoacyl-[acyl-carrier-protein] synthase III (Erythrobacter litoralis (strain HTCC2594)).